The chain runs to 156 residues: uncharacterized protein (156 aa).

His55 is a catalytic residue.

Belongs to the thioester dehydratase family. FabZ subfamily.

This is an uncharacterized protein from Halalkalibacterium halodurans (strain ATCC BAA-125 / DSM 18197 / FERM 7344 / JCM 9153 / C-125) (Bacillus halodurans).